Here is a 187-residue protein sequence, read N- to C-terminus: Large ribosomal subunit protein uL5 (187 aa).

It belongs to the universal ribosomal protein uL5 family. Part of the 50S ribosomal subunit; part of the 5S rRNA/L5/L18/L25 subcomplex. Contacts the 5S rRNA and the P site tRNA. Forms a bridge to the 30S subunit in the 70S ribosome.

This is one of the proteins that bind and probably mediate the attachment of the 5S RNA into the large ribosomal subunit, where it forms part of the central protuberance. In the 70S ribosome it contacts protein S13 of the 30S subunit (bridge B1b), connecting the 2 subunits; this bridge is implicated in subunit movement. Contacts the P site tRNA; the 5S rRNA and some of its associated proteins might help stabilize positioning of ribosome-bound tRNAs. In Ruegeria sp. (strain TM1040) (Silicibacter sp.), this protein is Large ribosomal subunit protein uL5.